The sequence spans 2069 residues: Dedicator of cytokinesis protein 9 (2069 aa).

4 positions are modified to phosphoserine: serine 21, serine 32, serine 167, and serine 170. One can recognise a PH domain in the interval 174–281; sequence GITKHGWLYK…WITILNKILQ (108 aa). The disordered stretch occupies residues 290–313; it reads EKRNGDSHEDDEQSKLEGSGSGLD. Phosphoserine occurs at positions 433 and 443. The C2 DOCK-type domain maps to 640-818; that stretch reads TNHLYVYPKY…PLLKISTHLV (179 aa). Phosphoserine occurs at positions 927 and 1235. Threonine 1241 carries the post-translational modification Phosphothreonine. The interval 1241–1282 is disordered; it reads TPNINSVRNADSRGSLISTDSGNSLPERNSEKSNSLDKHQQS. Phosphoserine is present on residues serine 1255, serine 1261, and serine 1264. Residues 1255 to 1267 show a composition bias toward polar residues; that stretch reads SLISTDSGNSLPE. Residues 1268 to 1280 show a composition bias toward basic and acidic residues; that stretch reads RNSEKSNSLDKHQ. The region spanning 1605-2069 is the DOCKER domain; sequence KSYASTPELR…LSEIMHEQLG (465 aa). Residues 1693 to 2069 are interaction with CDC42; the sequence is DEEASMMEDV…LSEIMHEQLG (377 aa). Coiled coils occupy residues 1948–1982 and 2034–2067; these read IEVAIDEMSKKVAELRQLCSSAEVDMIKLQLKLQG and NERLIKEDQLEYQEEMKANYREMAKELSEIMHEQ.

Belongs to the DOCK family. Homodimer. Interacts preferentially with nucleotide-depleted CDC42. Widely expressed, with highest expression in heart and placenta. Expressed at intermediate level in kidney, brain, lung and skeletal muscle.

It is found in the endomembrane system. In terms of biological role, guanine nucleotide-exchange factor (GEF) that activates CDC42 by exchanging bound GDP for free GTP. Overexpression induces filopodia formation. The polypeptide is Dedicator of cytokinesis protein 9 (Homo sapiens (Human)).